A 225-amino-acid polypeptide reads, in one-letter code: 7-cyano-7-deazaguanine synthase (225 aa).

7 to 17 (LSGGMDSTTLL) serves as a coordination point for ATP. Cys-183, Cys-191, Cys-194, and Cys-197 together coordinate Zn(2+).

Belongs to the QueC family. In terms of assembly, homodimer. Requires Zn(2+) as cofactor.

The catalysed reaction is 7-carboxy-7-deazaguanine + NH4(+) + ATP = 7-cyano-7-deazaguanine + ADP + phosphate + H2O + H(+). It functions in the pathway purine metabolism; 7-cyano-7-deazaguanine biosynthesis. Functionally, catalyzes the ATP-dependent conversion of 7-carboxy-7-deazaguanine (CDG) to 7-cyano-7-deazaguanine (preQ(0)). The protein is 7-cyano-7-deazaguanine synthase of Caldicellulosiruptor saccharolyticus (strain ATCC 43494 / DSM 8903 / Tp8T 6331).